Reading from the N-terminus, the 355-residue chain is Elongation factor Ts (355 aa).

The involved in Mg(2+) ion dislocation from EF-Tu stretch occupies residues 82–85; sequence TDFV.

It belongs to the EF-Ts family.

It localises to the cytoplasm. Its function is as follows. Associates with the EF-Tu.GDP complex and induces the exchange of GDP to GTP. It remains bound to the aminoacyl-tRNA.EF-Tu.GTP complex up to the GTP hydrolysis stage on the ribosome. The chain is Elongation factor Ts from Helicobacter pylori (strain G27).